Here is a 142-residue protein sequence, read N- to C-terminus: MDFVEVKNLIMKSGMELKVNGVFNANPERFSINVGHSTEEIAVHVDVRFSYLSDKRQLIINHKTGDAWQEEQRDARFPFTAGQAFQVSVVFNFDTFDIYLPDGQVAHFTNHLGAQEYKYIFFVGDATVKNISVNVADKPTKR.

In terms of domain architecture, Galectin spans 3-134; sequence FVEVKNLIMK…DATVKNISVN (132 aa). 68 to 74 is an a beta-D-galactoside binding site; sequence WQEEQRD. Asn130 carries N-linked (GlcNAc...) asparagine glycosylation.

Homodimer. Post-translationally, the N-terminus is blocked. In terms of tissue distribution, skin; highest expression in that of individuals showing resistance to infectious disease.

The protein localises to the secreted. Functionally, involved in host defense at the body surface. Causes agglutination of the Gram-positive bacterium S.difficile. Possesses calcium-independent hemagglutinating activity. The chain is Galactose-binding lectin l-1 from Anguilla japonica (Japanese eel).